A 318-amino-acid chain; its full sequence is Ankyrin repeat and SOCS box protein 7 (318 aa).

ANK repeat units follow at residues Gln-13–Gly-42, Asn-46–Val-75, Gly-80–Ile-109, Asp-116–Pro-145, Lys-149–Ile-178, Asn-180–Leu-208, and Asp-213–Thr-242. The 54-residue stretch at Leu-265–Ile-318 folds into the SOCS box domain.

Belongs to the ankyrin SOCS box (ASB) family. In terms of assembly, interacts with CUL5. Interacts with RNF7. Interacts with PSRC1.

It is found in the nucleus. It localises to the cytoplasm. It functions in the pathway protein modification; protein ubiquitination. Its function is as follows. Probable substrate-recognition component of a SCF-like ECS (Elongin-Cullin-SOCS-box protein) E3 ubiquitin-protein ligase complex which mediates the ubiquitination and subsequent proteasomal degradation of target proteins. Plays a role in spindle dynamics and genome integrity by targeting the mitotic progression protein PSRC1 for proteasomal degradation in a cell cycle-dependent manner. Also participates in meiosis by mediating the proper attachment between kinetochores and microtubules. This chain is Ankyrin repeat and SOCS box protein 7 (Asb7), found in Mus musculus (Mouse).